Reading from the N-terminus, the 184-residue chain is Ribosome-recycling factor (184 aa).

It belongs to the RRF family.

It localises to the cytoplasm. In terms of biological role, responsible for the release of ribosomes from messenger RNA at the termination of protein biosynthesis. May increase the efficiency of translation by recycling ribosomes from one round of translation to another. The chain is Ribosome-recycling factor from Staphylococcus carnosus (strain TM300).